A 75-amino-acid chain; its full sequence is uncharacterized protein (75 aa).

This is an uncharacterized protein from Bovine papillomavirus type 3.